Consider the following 433-residue polypeptide: Phosphoribosylamine--glycine ligase (433 aa).

The ATP-grasp domain occupies 111–317; sequence EFMARNNIKG…FVDICEAIVD (207 aa). ATP is bound at residue 138 to 194; that stretch reads EDNPDVVVKPAGLTGGKGVKVMGEHMHTLEEAREYVKSVLEHDRVVIEERLKGEEVT. Gln-275, Glu-287, and Asn-289 together coordinate Mg(2+). Mn(2+)-binding residues include Gln-275, Glu-287, and Asn-289.

Belongs to the GARS family. Mg(2+) is required as a cofactor. It depends on Mn(2+) as a cofactor.

The enzyme catalyses 5-phospho-beta-D-ribosylamine + glycine + ATP = N(1)-(5-phospho-beta-D-ribosyl)glycinamide + ADP + phosphate + H(+). Its pathway is purine metabolism; IMP biosynthesis via de novo pathway; N(1)-(5-phospho-D-ribosyl)glycinamide from 5-phospho-alpha-D-ribose 1-diphosphate: step 2/2. This chain is Phosphoribosylamine--glycine ligase, found in Methanocella arvoryzae (strain DSM 22066 / NBRC 105507 / MRE50).